Consider the following 619-residue polypeptide: Dihydroxy-acid dehydratase (619 aa).

Residue D81 coordinates Mg(2+). C122 lines the [2Fe-2S] cluster pocket. Residues D123 and K124 each coordinate Mg(2+). K124 is subject to N6-carboxylysine. C195 contacts [2Fe-2S] cluster. E494 lines the Mg(2+) pocket. S520 serves as the catalytic Proton acceptor.

The protein belongs to the IlvD/Edd family. As to quaternary structure, homodimer. Requires [2Fe-2S] cluster as cofactor. Mg(2+) is required as a cofactor.

The enzyme catalyses (2R)-2,3-dihydroxy-3-methylbutanoate = 3-methyl-2-oxobutanoate + H2O. The catalysed reaction is (2R,3R)-2,3-dihydroxy-3-methylpentanoate = (S)-3-methyl-2-oxopentanoate + H2O. It functions in the pathway amino-acid biosynthesis; L-isoleucine biosynthesis; L-isoleucine from 2-oxobutanoate: step 3/4. It participates in amino-acid biosynthesis; L-valine biosynthesis; L-valine from pyruvate: step 3/4. In terms of biological role, functions in the biosynthesis of branched-chain amino acids. Catalyzes the dehydration of (2R,3R)-2,3-dihydroxy-3-methylpentanoate (2,3-dihydroxy-3-methylvalerate) into 2-oxo-3-methylpentanoate (2-oxo-3-methylvalerate) and of (2R)-2,3-dihydroxy-3-methylbutanoate (2,3-dihydroxyisovalerate) into 2-oxo-3-methylbutanoate (2-oxoisovalerate), the penultimate precursor to L-isoleucine and L-valine, respectively. This Shewanella putrefaciens (strain CN-32 / ATCC BAA-453) protein is Dihydroxy-acid dehydratase.